The chain runs to 213 residues: Pyridoxine/pyridoxamine 5'-phosphate oxidase (213 aa).

Residues Arg-60–Lys-65, Tyr-75–Ser-76, Lys-82, and Gln-104 contribute to the FMN site. Lys-65 provides a ligand contact to substrate. Residues Tyr-122 and Arg-126 each coordinate substrate. Residues Gln-139–Ser-140 and Trp-184 contribute to the FMN site. Arg-190 to His-192 is a binding site for substrate. Arg-194 lines the FMN pocket.

Belongs to the pyridoxamine 5'-phosphate oxidase family. As to quaternary structure, homodimer. It depends on FMN as a cofactor.

It catalyses the reaction pyridoxamine 5'-phosphate + O2 + H2O = pyridoxal 5'-phosphate + H2O2 + NH4(+). It carries out the reaction pyridoxine 5'-phosphate + O2 = pyridoxal 5'-phosphate + H2O2. It functions in the pathway cofactor metabolism; pyridoxal 5'-phosphate salvage; pyridoxal 5'-phosphate from pyridoxamine 5'-phosphate: step 1/1. It participates in cofactor metabolism; pyridoxal 5'-phosphate salvage; pyridoxal 5'-phosphate from pyridoxine 5'-phosphate: step 1/1. In terms of biological role, catalyzes the oxidation of either pyridoxine 5'-phosphate (PNP) or pyridoxamine 5'-phosphate (PMP) into pyridoxal 5'-phosphate (PLP). This chain is Pyridoxine/pyridoxamine 5'-phosphate oxidase, found in Bradyrhizobium diazoefficiens (strain JCM 10833 / BCRC 13528 / IAM 13628 / NBRC 14792 / USDA 110).